A 311-amino-acid polypeptide reads, in one-letter code: Large ribosomal subunit protein uL18 (311 aa).

The protein belongs to the universal ribosomal protein uL18 family. As to quaternary structure, component of the large ribosomal subunit (LSU).

It localises to the cytoplasm. Its subcellular location is the nucleus. Functionally, component of the ribosome, a large ribonucleoprotein complex responsible for the synthesis of proteins in the cell. The small ribosomal subunit (SSU) binds messenger RNAs (mRNAs) and translates the encoded message by selecting cognate aminoacyl-transfer RNA (tRNA) molecules. The large subunit (LSU) contains the ribosomal catalytic site termed the peptidyl transferase center (PTC), which catalyzes the formation of peptide bonds, thereby polymerizing the amino acids delivered by tRNAs into a polypeptide chain. The nascent polypeptides leave the ribosome through a tunnel in the LSU and interact with protein factors that function in enzymatic processing, targeting, and the membrane insertion of nascent chains at the exit of the ribosomal tunnel. This Eimeria tenella (Coccidian parasite) protein is Large ribosomal subunit protein uL18 (RPL5).